The following is a 389-amino-acid chain: Elongation factor Tu-3 (389 aa).

Positions 10-203 (KPHLNIGTMG…AVDTYVPMPE (194 aa)) constitute a tr-type G domain. Residues 19-26 (GHVDHGKT) are G1. 19-26 (GHVDHGKT) contacts GTP. Threonine 26 serves as a coordination point for Mg(2+). Residues 60–64 (GITIN) are G2. A G3 region spans residues 81–84 (DMPG). GTP contacts are provided by residues 81–85 (DMPGH) and 136–139 (NKAD). Positions 136–139 (NKAD) are G4. The G5 stretch occupies residues 173–175 (SGL).

This sequence belongs to the TRAFAC class translation factor GTPase superfamily. Classic translation factor GTPase family. EF-Tu/EF-1A subfamily. Monomer.

Its subcellular location is the cytoplasm. The catalysed reaction is GTP + H2O = GDP + phosphate + H(+). GTP hydrolase that promotes the GTP-dependent binding of aminoacyl-tRNA to the A-site of ribosomes during protein biosynthesis. This chain is Elongation factor Tu-3, found in Streptomyces ramocissimus.